A 223-amino-acid chain; its full sequence is Small ribosomal subunit protein uS5 (223 aa).

Residues 1–66 form a disordered region; sequence MPPQQQRGRG…AERAQAETEF (66 aa). A compositionally biased stretch (gly residues) spans 13-22; the sequence is RGPGGPGGPG. The segment covering 53 to 66 has biased composition (basic and acidic residues); the sequence is GGDKAERAQAETEF. Residues 66–129 form the S5 DRBM domain; sequence FQERVVQIRR…SDARKALIRV (64 aa).

The protein belongs to the universal ribosomal protein uS5 family. In terms of assembly, part of the 30S ribosomal subunit. Contacts proteins S4 and S8.

Functionally, with S4 and S12 plays an important role in translational accuracy. Its function is as follows. Located at the back of the 30S subunit body where it stabilizes the conformation of the head with respect to the body. The protein is Small ribosomal subunit protein uS5 of Gloeobacter violaceus (strain ATCC 29082 / PCC 7421).